We begin with the raw amino-acid sequence, 464 residues long: FERM domain-containing protein 8 (464 aa).

Residue Met-1 is modified to N-acetylmethionine. The tract at residues Met-1–Val-22 is disordered. Position 24 is a phosphoserine (Ser-24). Positions Ala-30–Glu-376 constitute an FERM domain. A disordered region spans residues Glu-376–Ser-408. Phosphoserine is present on residues Ser-383, Ser-387, and Ser-408. A Phosphothreonine modification is found at Thr-419. 2 positions are modified to phosphoserine: Ser-439 and Ser-446.

Interacts with iRhom1/RHBDF1 and iRhom2/RHBDF2 (via cytoplasmic N-termini); this interaction leads to mutual protein stabilization. Interacts with ADAM17; this interaction is indirect and mediated by iRhom proteins. Interacts with LRP6; this interaction affects LRP6-binding to AXIN1. In terms of tissue distribution, widely expressed, with high expression in heart and spleen.

Its subcellular location is the cytoplasm. The protein localises to the cytosol. It is found in the cell membrane. Its function is as follows. Promotes the cell surface stability of iRhom1/RHBDF1 and iRhom2/RHBDF2 and prevents their degradation via the endolysosomal pathway. By acting on iRhoms, involved in ADAM17-mediated shedding of TNF, amphiregulin/AREG, HBEGF and TGFA from the cell surface. Negatively regulates Wnt signaling, possibly by antagonizing the recruitment of AXIN1 to LRP6. The sequence is that of FERM domain-containing protein 8 (FRMD8) from Homo sapiens (Human).